Reading from the N-terminus, the 330-residue chain is ADP-L-glycero-D-manno-heptose-6-epimerase (330 aa).

NADP(+) is bound by residues Phe11 to Ile12, Asp32 to Asn33, Lys39, Lys54, Glu75 to Ser79, and Asn92. Residue Tyr139 is the Proton acceptor of the active site. Lys143 lines the NADP(+) pocket. Asn168 contacts substrate. Residues Val169 and Lys177 each contribute to the NADP(+) site. Lys177 functions as the Proton acceptor in the catalytic mechanism. Residues Arg179, His186, Phe200–Tyr203, Arg213, and Tyr292 each bind substrate.

This sequence belongs to the NAD(P)-dependent epimerase/dehydratase family. HldD subfamily. Homopentamer. NADP(+) serves as cofactor.

The enzyme catalyses ADP-D-glycero-beta-D-manno-heptose = ADP-L-glycero-beta-D-manno-heptose. The protein operates within nucleotide-sugar biosynthesis; ADP-L-glycero-beta-D-manno-heptose biosynthesis; ADP-L-glycero-beta-D-manno-heptose from D-glycero-beta-D-manno-heptose 7-phosphate: step 4/4. Functionally, catalyzes the interconversion between ADP-D-glycero-beta-D-manno-heptose and ADP-L-glycero-beta-D-manno-heptose via an epimerization at carbon 6 of the heptose. The protein is ADP-L-glycero-D-manno-heptose-6-epimerase of Burkholderia cenocepacia (strain ATCC BAA-245 / DSM 16553 / LMG 16656 / NCTC 13227 / J2315 / CF5610) (Burkholderia cepacia (strain J2315)).